Consider the following 466-residue polypeptide: Ribulose bisphosphate carboxylase large chain (466 aa).

At Lys5 the chain carries N6,N6,N6-trimethyllysine. Substrate-binding residues include Asn114 and Thr164. The Proton acceptor role is filled by Lys166. Residue Lys168 participates in substrate binding. 3 residues coordinate Mg(2+): Lys192, Asp194, and Glu195. Residue Lys192 is modified to N6-carboxylysine. His285 functions as the Proton acceptor in the catalytic mechanism. Residues Arg286, His318, and Ser370 each contribute to the substrate site.

It belongs to the RuBisCO large chain family. Type I subfamily. Heterohexadecamer of 8 large chains and 8 small chains; disulfide-linked. The disulfide link is formed within the large subunit homodimers. Mg(2+) is required as a cofactor. Post-translationally, the disulfide bond which can form in the large chain dimeric partners within the hexadecamer appears to be associated with oxidative stress and protein turnover.

The protein resides in the plastid. It is found in the chloroplast. It catalyses the reaction 2 (2R)-3-phosphoglycerate + 2 H(+) = D-ribulose 1,5-bisphosphate + CO2 + H2O. The enzyme catalyses D-ribulose 1,5-bisphosphate + O2 = 2-phosphoglycolate + (2R)-3-phosphoglycerate + 2 H(+). Its function is as follows. RuBisCO catalyzes two reactions: the carboxylation of D-ribulose 1,5-bisphosphate, the primary event in carbon dioxide fixation, as well as the oxidative fragmentation of the pentose substrate in the photorespiration process. Both reactions occur simultaneously and in competition at the same active site. In Tropaeolum majus (Common nasturtium), this protein is Ribulose bisphosphate carboxylase large chain.